The chain runs to 95 residues: Parvalbumin alpha (95 aa).

Position 19 is a phosphoserine (serine 19). EF-hand domains lie at 34 to 69 (KNRE…FSAD) and 73 to 95 (LSDT…KIGA). Residues aspartate 47, aspartate 49, serine 51, phenylalanine 53, glutamate 55, glutamate 58, aspartate 86, aspartate 88, aspartate 90, and lysine 92 each contribute to the Ca(2+) site.

The protein belongs to the parvalbumin family.

Functionally, in muscle, parvalbumin is thought to be involved in relaxation after contraction. It binds two calcium ions. In Cavia porcellus (Guinea pig), this protein is Parvalbumin alpha (PVALB).